The primary structure comprises 93 residues: Large ribosomal subunit protein eL42 (93 aa).

Residues C11 and C14 each contribute to the Zn(2+) site. Residues C11 to C75 form a C4-type zinc finger. The disordered stretch occupies residues K24–P62. The Zn(2+) site is built by C72 and C75.

Belongs to the eukaryotic ribosomal protein eL42 family. Part of the 50S ribosomal subunit. It depends on Zn(2+) as a cofactor.

In terms of biological role, binds to the 23S rRNA. The chain is Large ribosomal subunit protein eL42 from Halobacterium salinarum (strain ATCC 700922 / JCM 11081 / NRC-1) (Halobacterium halobium).